We begin with the raw amino-acid sequence, 235 residues long: MSTESMIRDVELAEEALPKKAWGPQNSSRCLCLSLFSFLLVAGATTLFCLLNFGVIGPQREEKFPNNLPIIGSMAQTLTLRSSSQNSSDKPVAHVVANHQVDEQLEWLSRGANALLANGMDLKDNQLVIPADGLYLVYSQVLFKGQGCSSYVLLTHTVSRFAVSYEDKVNLLSAIKSPCPKETPEGSELKPWYEPIYLGGVFQLEKGDRLSAEVNLPKYLDFAESGQVYFGVIAL.

Topologically, residues 1-35 (MSTESMIRDVELAEEALPKKAWGPQNSSRCLCLSL) are cytoplasmic. At serine 2 the chain carries Phosphoserine; by CK1. Residues lysine 19 and lysine 20 are each lipidated (N6-myristoyl lysine). The helical; Signal-anchor for type II membrane protein transmembrane segment at 36-56 (FSFLLVAGATTLFCLLNFGVI) threads the bilayer. Residues 57–235 (GPQREEKFPN…GQVYFGVIAL (179 aa)) lie on the Extracellular side of the membrane. Residue serine 83 is glycosylated (O-linked (GalNAc...) serine; in soluble form). N-linked (GlcNAc...) asparagine glycosylation is present at asparagine 86. The region spanning 91-235 (PVAHVVANHQ…GQVYFGVIAL (145 aa)) is the THD domain. Cysteine 148 and cysteine 179 form a disulfide bridge.

This sequence belongs to the tumor necrosis factor family. Homotrimer. Interacts with SPPL2B. In terms of processing, the soluble form derives from the membrane form by proteolytic processing. The membrane-bound form is further proteolytically processed by SPPL2A or SPPL2B through regulated intramembrane proteolysis producing TNF intracellular domains (ICD1 and ICD2) released in the cytosol and TNF C-domain 1 and C-domain 2 secreted into the extracellular space. Post-translationally, the membrane form, but not the soluble form, is phosphorylated on serine residues. Dephosphorylation of the membrane form occurs by binding to soluble TNFRSF1A/TNFR1. O-glycosylated; glycans contain galactose, N-acetylgalactosamine and N-acetylneuraminic acid. In terms of processing, the soluble form is demyristoylated by SIRT6, promoting its secretion.

It localises to the cell membrane. The protein resides in the membrane. Its subcellular location is the secreted. Cytokine that binds to TNFRSF1A/TNFR1 and TNFRSF1B/TNFBR. It is mainly secreted by macrophages and can induce cell death of certain tumor cell lines. It is potent pyrogen causing fever by direct action or by stimulation of interleukin-1 secretion and is implicated in the induction of cachexia, Under certain conditions it can stimulate cell proliferation and induce cell differentiation. Induces insulin resistance in adipocytes via inhibition of insulin-induced IRS1 tyrosine phosphorylation and insulin-induced glucose uptake. Induces GKAP42 protein degradation in adipocytes which is partially responsible for TNF-induced insulin resistance. Plays a role in angiogenesis by inducing VEGF production synergistically with IL1B and IL6. Promotes osteoclastogenesis and therefore mediates bone resorption. In terms of biological role, the TNF intracellular domain (ICD) form induces IL12 production in dendritic cells. In Peromyscus leucopus (White-footed mouse), this protein is Tumor necrosis factor (TNF).